Here is a 118-residue protein sequence, read N- to C-terminus: MVKPTGPTDVNVRKLIRQLEKTKRPIFKYIAELLSKPKRRKKHFVVNLWKIEKHSNDGDTIIVPGKVLGSGELTKDVKVVALSFSQTALEKLKDKAIYLENFVEQAKDKKLPNTKILI.

This sequence belongs to the eukaryotic ribosomal protein eL18 family.

This Nanoarchaeum equitans (strain Kin4-M) protein is Large ribosomal subunit protein eL18.